Reading from the N-terminus, the 124-residue chain is Small ribosomal subunit protein uS12 (124 aa).

A disordered region spans residues 1-32 (MPTIQQLVRKGRQDKVSKNKTPALKGSPQRRG). 3-methylthioaspartic acid is present on Asp89.

The protein belongs to the universal ribosomal protein uS12 family. As to quaternary structure, part of the 30S ribosomal subunit. Contacts proteins S8 and S17. May interact with IF1 in the 30S initiation complex.

With S4 and S5 plays an important role in translational accuracy. In terms of biological role, interacts with and stabilizes bases of the 16S rRNA that are involved in tRNA selection in the A site and with the mRNA backbone. Located at the interface of the 30S and 50S subunits, it traverses the body of the 30S subunit contacting proteins on the other side and probably holding the rRNA structure together. The combined cluster of proteins S8, S12 and S17 appears to hold together the shoulder and platform of the 30S subunit. The chain is Small ribosomal subunit protein uS12 from Nocardioides sp. (strain ATCC BAA-499 / JS614).